The primary structure comprises 306 residues: Aspartate carbamoyltransferase catalytic subunit (306 aa).

Carbamoyl phosphate is bound by residues arginine 54 and threonine 55. Residue lysine 83 coordinates L-aspartate. Residues arginine 104, histidine 132, and glutamine 135 each coordinate carbamoyl phosphate. Arginine 165 and arginine 227 together coordinate L-aspartate. The carbamoyl phosphate site is built by leucine 266 and proline 267.

This sequence belongs to the aspartate/ornithine carbamoyltransferase superfamily. ATCase family. In terms of assembly, heterododecamer (2C3:3R2) of six catalytic PyrB chains organized as two trimers (C3), and six regulatory PyrI chains organized as three dimers (R2).

The enzyme catalyses carbamoyl phosphate + L-aspartate = N-carbamoyl-L-aspartate + phosphate + H(+). Its pathway is pyrimidine metabolism; UMP biosynthesis via de novo pathway; (S)-dihydroorotate from bicarbonate: step 2/3. Functionally, catalyzes the condensation of carbamoyl phosphate and aspartate to form carbamoyl aspartate and inorganic phosphate, the committed step in the de novo pyrimidine nucleotide biosynthesis pathway. In Clostridium novyi (strain NT), this protein is Aspartate carbamoyltransferase catalytic subunit.